A 147-amino-acid polypeptide reads, in one-letter code: Myosin-ID light chain (147 aa).

EF-hand domains follow at residues 8 to 43 (EAQS…LGQN), 79 to 114 (FDEK…LGER), and 115 to 147 (LPEE…MLKK). Residues Asp-21, Asn-23, Asp-25, Lys-27, and Glu-32 each contribute to the Ca(2+) site.

Myosin I is a dimer of a heavy and a light chain. Inability to self-assemble into filaments. Interacts with myoD. Does not interact with myoB or myoC.

The protein localises to the cytoplasm. Functionally, functions as the light chain for myosin-D. Has low affinity for calcium. The chain is Myosin-ID light chain (mlcD) from Dictyostelium discoideum (Social amoeba).